The primary structure comprises 189 residues: Cell division protein SepF (189 aa).

The disordered stretch occupies residues 18-64 (EVTDHEDVAKERPVKVQKTEQTPSQQQRKPERPQETVPPRRQHIKSD). Over residues 22 to 35 (HEDVAKERPVKVQK) the composition is skewed to basic and acidic residues.

The protein belongs to the SepF family. As to quaternary structure, homodimer. Interacts with FtsZ.

The protein localises to the cytoplasm. Its function is as follows. Cell division protein that is part of the divisome complex and is recruited early to the Z-ring. Probably stimulates Z-ring formation, perhaps through the cross-linking of FtsZ protofilaments. Its function overlaps with FtsA. This is Cell division protein SepF from Streptococcus thermophilus (strain ATCC BAA-250 / LMG 18311).